The chain runs to 116 residues: Large ribosomal subunit protein bL17 (116 aa).

It belongs to the bacterial ribosomal protein bL17 family. As to quaternary structure, part of the 50S ribosomal subunit. Contacts protein L32.

This is Large ribosomal subunit protein bL17 from Chloroflexus aggregans (strain MD-66 / DSM 9485).